Reading from the N-terminus, the 97-residue chain is Ferredoxin-thioredoxin reductase, variable chain (97 aa).

It belongs to the ferredoxin thioredoxin reductase alpha subunit family. Heterodimer of subunit A (variable subunit) and subunit B (catalytic subunit). Heterodimeric FTR forms a complex with ferredoxin and thioredoxin.

Its subcellular location is the plastid. The protein localises to the chloroplast. Its function is as follows. Variable subunit of the ferredoxin-thioredoxin reductase (FTR), which catalyzes the two-electron reduction of thioredoxins by the electrons provided by reduced ferredoxin. The chain is Ferredoxin-thioredoxin reductase, variable chain from Zea mays (Maize).